Consider the following 874-residue polypeptide: Alanine--tRNA ligase (874 aa).

The Zn(2+) site is built by His-562, His-566, Cys-665, and His-669.

This sequence belongs to the class-II aminoacyl-tRNA synthetase family. The cofactor is Zn(2+).

The protein localises to the cytoplasm. The catalysed reaction is tRNA(Ala) + L-alanine + ATP = L-alanyl-tRNA(Ala) + AMP + diphosphate. Its function is as follows. Catalyzes the attachment of alanine to tRNA(Ala) in a two-step reaction: alanine is first activated by ATP to form Ala-AMP and then transferred to the acceptor end of tRNA(Ala). Also edits incorrectly charged Ser-tRNA(Ala) and Gly-tRNA(Ala) via its editing domain. This Pseudomonas putida (strain W619) protein is Alanine--tRNA ligase.